The following is a 470-amino-acid chain: GTPase grn1 (470 aa).

The segment covering 1-16 (MVSLKKKSKRRTTRLR) has biased composition (basic residues). Positions 1–56 (MVSLKKKSKRRTTRLRSRIEKKAAESKRKQKRADKKNPQWKSRIPKDPGIPNSFPY) are disordered. The span at 17–27 (SRIEKKAAESK) shows a compositional bias: basic and acidic residues. The CP-type G domain maps to 153–333 (DKEFKKVVEA…LVDSPGIVFP (181 aa)). GTP is bound by residues 202–205 (NKID), 276–283 (GYPNVGKS), and 326–329 (DSPG). The RNA-binding stretch occupies residues 405–415 (ARKRGRLGRGG).

It belongs to the TRAFAC class YlqF/YawG GTPase family.

It is found in the nucleus. The protein localises to the nucleolus. Required for optimal growth. Required for normal processing of ribosomal pre-rRNA. Required for nuclear export of ribosomal protein rpl2501. This chain is GTPase grn1, found in Schizosaccharomyces pombe (strain 972 / ATCC 24843) (Fission yeast).